A 287-amino-acid chain; its full sequence is Bifunctional protein FolD (287 aa).

NADP(+) contacts are provided by residues 166-168 (GAS) and Ile-232.

It belongs to the tetrahydrofolate dehydrogenase/cyclohydrolase family. Homodimer.

It carries out the reaction (6R)-5,10-methylene-5,6,7,8-tetrahydrofolate + NADP(+) = (6R)-5,10-methenyltetrahydrofolate + NADPH. The enzyme catalyses (6R)-5,10-methenyltetrahydrofolate + H2O = (6R)-10-formyltetrahydrofolate + H(+). The protein operates within one-carbon metabolism; tetrahydrofolate interconversion. Functionally, catalyzes the oxidation of 5,10-methylenetetrahydrofolate to 5,10-methenyltetrahydrofolate and then the hydrolysis of 5,10-methenyltetrahydrofolate to 10-formyltetrahydrofolate. This is Bifunctional protein FolD from Pectobacterium carotovorum subsp. carotovorum (strain PC1).